The primary structure comprises 420 residues: Glycogen synthase kinase-3 beta (420 aa).

Residues 1 to 22 show a composition bias toward polar residues; it reads MSGRPRTTSFAESCKPVQQPSA. The interval 1–35 is disordered; the sequence is MSGRPRTTSFAESCKPVQQPSAFGSMKVSRDKDGS. A Phosphoserine; by PKB/AKT1, RPS6KA3 and SGK3 modification is found at Ser-9. The S-palmitoyl cysteine moiety is linked to residue Cys-14. The region spanning 56–340 is the Protein kinase domain; the sequence is YTDTKVIGNG…PLEACAHSFF (285 aa). Residues 62–70 and Lys-85 contribute to the ATP site; that span reads IGNGSFGVV. Residue Asp-181 is the Proton acceptor of the active site. Residue Tyr-216 is modified to Phosphotyrosine. Low complexity-rich tracts occupy residues 387 to 401 and 409 to 420; these read AAST…SDAN and NNAAFASASNST. Positions 387-420 are disordered; that stretch reads AASTPTNATAASDANAGDRGQTNNAAFASASNST. Ser-389 bears the Phosphoserine mark. At Thr-390 the chain carries Phosphothreonine.

It belongs to the protein kinase superfamily. CMGC Ser/Thr protein kinase family. GSK-3 subfamily. Monomer. Interacts with DAB2IP (via C2 domain); the interaction stimulates GSK3B kinase activation. Interacts (via C2 domain) with PPP2CA. Interacts with ARRB2, AXIN1, CABYR, DISC1, MMP2, MUC1, NIN, PRUNE1 and ZBED3. Interacts with AXIN1; the interaction mediates hyperphosphorylation of CTNNB1 leading to its ubiquitination and destruction. Interacts with and phosphorylates SNAI1. Interacts with DNM1L (via a C-terminal domain). Found in a complex composed of MACF1, APC, AXIN1, CTNNB1 and GSK3B. Interacts with SGK3. Interacts with the CLOCK-BMAL1 heterodimer. Interacts with the BMAL1. Interacts with CTNND2. The complex composed, at least, of APC, CTNNB1 and GSK3B interacts with JPT1; the interaction requires the inactive form of GSK3B (phosphorylated at 'Ser-9'). Forms a complex composed of PRKAR2A or PRKAR2B, GSK3B and GSKIP through GSKIP interaction; facilitates PKA-induced phosphorylation and regulates GSK3B activity. Interacts with GSKIP. Interacts with GID8. Interacts with PIWIL2. Interacts with LMBR1L. Interacts with DDX3X. Interacts with BIRC2. Interacts with TNFRSF10B; TNFRSF10B stimulation inhibits GSK3B kinase activity. Found in a complex with SLC39A6, SLC39A10 and with GSK3B that controls NCAM1 phosphorylation. Interacts with PKP3 (via ARM repeats); the interaction may be involved in PKP3 protein degradation. In terms of processing, phosphorylated by AKT1 and ILK1. Upon insulin-mediated signaling, the activated PKB/AKT1 and RPS6KA3 protein kinases phosphorylate and deactivate GSK3B, resulting in the dephosphorylation and activation of GYS1. Activated by phosphorylation at Tyr-216. Inactivated by phosphorylation at Ser-9. Post-translationally, mono-ADP-ribosylation by PARP10 negatively regulates kinase activity. Palmitoylated. Palmitoylation by ZDHHC4 prevents AKT1-mediated phosphorylation.

The protein resides in the cytoplasm. It is found in the nucleus. Its subcellular location is the cell membrane. It catalyses the reaction L-seryl-[tau protein] + ATP = O-phospho-L-seryl-[tau protein] + ADP + H(+). The catalysed reaction is L-threonyl-[tau protein] + ATP = O-phospho-L-threonyl-[tau protein] + ADP + H(+). It carries out the reaction L-seryl-[protein] + ATP = O-phospho-L-seryl-[protein] + ADP + H(+). The enzyme catalyses L-threonyl-[protein] + ATP = O-phospho-L-threonyl-[protein] + ADP + H(+). Its activity is regulated as follows. Activated by phosphorylation at Tyr-216. In response to insulin, inhibited by phosphorylation at Ser-9 by PKB/AKT1; phosphorylation at this site causes a conformational change, preventing access of substrates to the active site. Inhibited by IL22 treatment which also triggers phosphorylation at Ser-9, promoting inactivation. Inhibited by lithium. Constitutively active protein kinase that acts as a negative regulator in the hormonal control of glucose homeostasis, Wnt signaling and regulation of transcription factors and microtubules, by phosphorylating and inactivating glycogen synthase (GYS1 or GYS2), EIF2B, CTNNB1/beta-catenin, APC, AXIN1, DPYSL2/CRMP2, JUN, NFATC1/NFATC, MAPT/TAU and MACF1. Requires primed phosphorylation of the majority of its substrates. In skeletal muscle, contributes to insulin regulation of glycogen synthesis by phosphorylating and inhibiting GYS1 activity and hence glycogen synthesis. May also mediate the development of insulin resistance by regulating activation of transcription factors. Regulates protein synthesis by controlling the activity of initiation factor 2B (EIF2BE/EIF2B5) in the same manner as glycogen synthase. In Wnt signaling, GSK3B forms a multimeric complex with APC, AXIN1 and CTNNB1/beta-catenin and phosphorylates the N-terminus of CTNNB1 leading to its degradation mediated by ubiquitin/proteasomes. Phosphorylates JUN at sites proximal to its DNA-binding domain, thereby reducing its affinity for DNA. Phosphorylates NFATC1/NFATC on conserved serine residues promoting NFATC1/NFATC nuclear export, shutting off NFATC1/NFATC gene regulation, and thereby opposing the action of calcineurin. Phosphorylates MAPT/TAU on 'Thr-548', decreasing significantly MAPT/TAU ability to bind and stabilize microtubules. MAPT/TAU is the principal component of neurofibrillary tangles in Alzheimer disease. Plays an important role in ERBB2-dependent stabilization of microtubules at the cell cortex. Phosphorylates MACF1, inhibiting its binding to microtubules which is critical for its role in bulge stem cell migration and skin wound repair. Probably regulates NF-kappa-B (NFKB1) at the transcriptional level and is required for the NF-kappa-B-mediated anti-apoptotic response to TNF-alpha (TNF/TNFA). Negatively regulates replication in pancreatic beta-cells, resulting in apoptosis, loss of beta-cells and diabetes. Through phosphorylation of the anti-apoptotic protein MCL1, may control cell apoptosis in response to growth factors deprivation. Phosphorylates MUC1 in breast cancer cells, decreasing the interaction of MUC1 with CTNNB1/beta-catenin. Is necessary for the establishment of neuronal polarity and axon outgrowth. Phosphorylates MARK2, leading to inhibition of its activity. Phosphorylates SIK1 at 'Thr-182', leading to sustainment of its activity. Phosphorylates ZC3HAV1 which enhances its antiviral activity. Phosphorylates SNAI1, leading to its ubiquitination and proteasomal degradation. Phosphorylates SFPQ at 'Thr-687' upon T-cell activation. Phosphorylates NR1D1 st 'Ser-55' and 'Ser-59' and stabilizes it by protecting it from proteasomal degradation. Regulates the circadian clock via phosphorylation of the major clock components including BMAL1, CLOCK and PER2. Phosphorylates CLOCK AT 'Ser-427' and targets it for proteasomal degradation. Phosphorylates BMAL1 at 'Ser-17' and 'Ser-21' and primes it for ubiquitination and proteasomal degradation. Phosphorylates FBXL2 at 'Thr-404' and primes it for ubiquitination by the SCF(FBXO3) complex and proteasomal degradation. Phosphorylates OGT at 'Ser-3' or 'Ser-4' which positively regulates its activity. Phosphorylates MYCN in neuroblastoma cells which may promote its degradation. Regulates the circadian rhythmicity of hippocampal long-term potentiation and BMAL1 and PER2 expression. Acts as a regulator of autophagy by mediating phosphorylation of KAT5/TIP60 under starvation conditions, activating KAT5/TIP60 acetyltransferase activity and promoting acetylation of key autophagy regulators, such as ULK1 and RUBCNL/Pacer. Negatively regulates extrinsic apoptotic signaling pathway via death domain receptors. Promotes the formation of an anti-apoptotic complex, made of DDX3X, BRIC2 and GSK3B, at death receptors, including TNFRSF10B. The anti-apoptotic function is most effective with weak apoptotic signals and can be overcome by stronger stimulation. Phosphorylates E2F1, promoting the interaction between E2F1 and USP11, stabilizing E2F1 and promoting its activity. Phosphorylates mTORC2 complex component RICTOR at 'Ser-1235' in response to endoplasmic stress, inhibiting mTORC2. Phosphorylates FXR1, promoting FXR1 ubiquitination by the SCF(FBXO4) complex and FXR1 degradation by the proteasome. Phosphorylates interleukin-22 receptor subunit IL22RA1, preventing its proteasomal degradation. The protein is Glycogen synthase kinase-3 beta of Spermophilus citellus (European ground squirrel).